Here is a 220-residue protein sequence, read N- to C-terminus: 7-carboxy-7-deazaguanine synthase (220 aa).

Substrate-binding positions include 16–18 (IQG) and Arg31. One can recognise a Radical SAM core domain in the interval 22 to 215 (FAGWPCAFVR…LQLHKYIWNP (194 aa)). Residues Cys35, Cys39, and Cys42 each contribute to the [4Fe-4S] cluster site. Thr44 serves as a coordination point for Mg(2+). Thr74 serves as a coordination point for substrate. Gly76 lines the S-adenosyl-L-methionine pocket.

The protein belongs to the radical SAM superfamily. 7-carboxy-7-deazaguanine synthase family. Homodimer. It depends on [4Fe-4S] cluster as a cofactor. S-adenosyl-L-methionine is required as a cofactor. Mg(2+) serves as cofactor.

It carries out the reaction 6-carboxy-5,6,7,8-tetrahydropterin + H(+) = 7-carboxy-7-deazaguanine + NH4(+). Its pathway is purine metabolism; 7-cyano-7-deazaguanine biosynthesis. Catalyzes the complex heterocyclic radical-mediated conversion of 6-carboxy-5,6,7,8-tetrahydropterin (CPH4) to 7-carboxy-7-deazaguanine (CDG), a step common to the biosynthetic pathways of all 7-deazapurine-containing compounds. The polypeptide is 7-carboxy-7-deazaguanine synthase (Chlorobaculum tepidum (strain ATCC 49652 / DSM 12025 / NBRC 103806 / TLS) (Chlorobium tepidum)).